A 506-amino-acid chain; its full sequence is Maturase K (506 aa).

It belongs to the intron maturase 2 family. MatK subfamily.

It localises to the plastid. Its subcellular location is the chloroplast. Its function is as follows. Usually encoded in the trnK tRNA gene intron. Probably assists in splicing its own and other chloroplast group II introns. This chain is Maturase K, found in Trifolium willdenovii (Tomcat clover).